The sequence spans 734 residues: Cullin-4 (734 aa).

In terms of domain architecture, Cullin neddylation spans 666–728 (DRQFELQASI…KEYLEREDND (63 aa)). Lysine 680 participates in a covalent cross-link: Glycyl lysine isopeptide (Lys-Gly) (interchain with G-Cter in NEDD8).

The protein belongs to the cullin family. As to quaternary structure, component of the Clr4 methyltransferase complex (ClrC) composed of at least clr4, rik1, pcu4, rbx1, raf1 and raf2. The cullin pcu4, rik1, raf1, raf2 and the ring-box protein rbx1 are components of an E3 ubiquitin ligase, whose activity is essential for heterochromatin assembly. Neddylated; enhancing the ubiquitin-ligase activity.

It localises to the cytoplasm. Its subcellular location is the nucleus. It is found in the chromosome. It functions in the pathway protein modification; protein ubiquitination. Required, indirectly, for activation of ribonucleotide reductase through the degradation of the protein spd1, thereby supplying deoxyribonucleotides for DNA replication and repair. Also has a role as a scaffold for assembling ubiquitin ligases. Component of the Clr4 methyltransferase complex (ClrC) which contributes to the establishment of heterochromatin by specifically methylating histone H3 to form H3K9me. ClrC preferentially ubiquitylates H3K14 and ClrC-mediated H3 ubiquitination promotes clr4 methyltransferase activity for the methylation of H3K9. H3K9me represents a specific tag for epigenetic transcriptional repression by recruiting swi6/HP1 to methylated histones which leads to transcriptional silencing within centromeric heterochromatin, telomeric regions and at the silent mating-type loci. This chain is Cullin-4 (pcu4), found in Schizosaccharomyces pombe (strain 972 / ATCC 24843) (Fission yeast).